Here is a 376-residue protein sequence, read N- to C-terminus: 23S rRNA (uracil(747)-C(5))-methyltransferase RlmC (376 aa).

4 residues coordinate [4Fe-4S] cluster: Cys-3, Cys-11, Cys-14, and Cys-88. S-adenosyl-L-methionine contacts are provided by Gln-213, Phe-242, Glu-263, and Asn-308. Cys-335 (nucleophile) is an active-site residue.

Belongs to the class I-like SAM-binding methyltransferase superfamily. RNA M5U methyltransferase family. RlmC subfamily.

The enzyme catalyses uridine(747) in 23S rRNA + S-adenosyl-L-methionine = 5-methyluridine(747) in 23S rRNA + S-adenosyl-L-homocysteine + H(+). Catalyzes the formation of 5-methyl-uridine at position 747 (m5U747) in 23S rRNA. In Vibrio vulnificus (strain CMCP6), this protein is 23S rRNA (uracil(747)-C(5))-methyltransferase RlmC.